The sequence spans 410 residues: Putative competence-damage inducible protein (410 aa).

Belongs to the CinA family.

This chain is Putative competence-damage inducible protein, found in Clostridium kluyveri (strain NBRC 12016).